The sequence spans 276 residues: Orotidine 5'-phosphate decarboxylase (276 aa).

The active-site Proton donor is lysine 95.

It belongs to the OMP decarboxylase family. Type 2 subfamily.

The enzyme catalyses orotidine 5'-phosphate + H(+) = UMP + CO2. The protein operates within pyrimidine metabolism; UMP biosynthesis via de novo pathway; UMP from orotate: step 2/2. The chain is Orotidine 5'-phosphate decarboxylase (pyrF) from Mycolicibacterium smegmatis (strain ATCC 700084 / mc(2)155) (Mycobacterium smegmatis).